We begin with the raw amino-acid sequence, 304 residues long: Mas-related G-protein coupled receptor member A (304 aa).

Residues 1-17 (MDKTIPGSFNSRTLIPN) lie on the Extracellular side of the membrane. A helical membrane pass occupies residues 18–38 (LLIIISGLVGLIGNAMVFWLL). The Cytoplasmic portion of the chain corresponds to 39–46 (GFRLARNA). Residues 47–67 (FSVYILNLALADFLFLLCHII) traverse the membrane as a helical segment. Topologically, residues 68 to 80 (DSTLLLLKFSYPN) are extracellular. The helical transmembrane segment at 81–101 (IIFLPCFNTVMMVPYIAGLSM) threads the bilayer. Residues 102-132 (LSAISTERCLSVVCPIWYRCRRPKHTSTVMC) lie on the Cytoplasmic side of the membrane. The chain crosses the membrane as a helical span at residues 133 to 153 (SAIWVLSLLICILNRYFCGFL). The Extracellular portion of the chain corresponds to 154-167 (DTKYEKDNRCLASN). A helical transmembrane segment spans residues 168–188 (FFTAACLIFLFVVLCLSSLAL). The Cytoplasmic portion of the chain corresponds to 189–211 (LVRLFCGAGRMKLTRLYATIMLT). The chain crosses the membrane as a helical span at residues 212–232 (VLVFLLCGLPFGIHWFLLIWI). Residues 233–244 (KIDYGKFAYGLY) are Extracellular-facing. Residues 245–265 (LAALVLTAVNSCANPIIYFFV) form a helical membrane-spanning segment. The Cytoplasmic segment spans residues 266-304 (GSFRHQKHQTLKMVLQRALQDTPETAENTVEMSSSKVEP).

It belongs to the G-protein coupled receptor 1 family. Mas subfamily. In terms of tissue distribution, expressed in a subset of IB4-positive small diameter nociceptive dorsal root neurons.

Its subcellular location is the cell membrane. In terms of biological role, orphan receptor activated by a subset of RFamide-family neuropeptides such as FLRF-amide and FMRF-amide. Mediates its action by association with G proteins that activate a phosphatidylinositol-calcium second messenger system. Its effect is mediated by G(q) and G(11) proteins. May regulate the function of nociceptive neurons by modulation of pain perception. The polypeptide is Mas-related G-protein coupled receptor member A (Mrgpra) (Rattus norvegicus (Rat)).